The following is a 282-amino-acid chain: 2-dehydro-3-deoxyphosphooctonate aldolase (282 aa).

It belongs to the KdsA family.

Its subcellular location is the cytoplasm. It carries out the reaction D-arabinose 5-phosphate + phosphoenolpyruvate + H2O = 3-deoxy-alpha-D-manno-2-octulosonate-8-phosphate + phosphate. It participates in carbohydrate biosynthesis; 3-deoxy-D-manno-octulosonate biosynthesis; 3-deoxy-D-manno-octulosonate from D-ribulose 5-phosphate: step 2/3. It functions in the pathway bacterial outer membrane biogenesis; lipopolysaccharide biosynthesis. The sequence is that of 2-dehydro-3-deoxyphosphooctonate aldolase from Shewanella amazonensis (strain ATCC BAA-1098 / SB2B).